We begin with the raw amino-acid sequence, 365 residues long: Chorismate synthase (365 aa).

Residues arginine 48 and arginine 54 each contribute to the NADP(+) site. FMN is bound by residues 131–133, 243–244, glycine 288, 303–307, and arginine 329; these read RSS, NA, and KPTSS.

Belongs to the chorismate synthase family. In terms of assembly, homotetramer. It depends on FMNH2 as a cofactor.

The catalysed reaction is 5-O-(1-carboxyvinyl)-3-phosphoshikimate = chorismate + phosphate. Its pathway is metabolic intermediate biosynthesis; chorismate biosynthesis; chorismate from D-erythrose 4-phosphate and phosphoenolpyruvate: step 7/7. Catalyzes the anti-1,4-elimination of the C-3 phosphate and the C-6 proR hydrogen from 5-enolpyruvylshikimate-3-phosphate (EPSP) to yield chorismate, which is the branch point compound that serves as the starting substrate for the three terminal pathways of aromatic amino acid biosynthesis. This reaction introduces a second double bond into the aromatic ring system. The protein is Chorismate synthase of Rhizobium leguminosarum bv. trifolii (strain WSM2304).